The chain runs to 436 residues: Trigger factor (436 aa).

Positions 163 to 248 (GDTVNIDFDG…VNEIKYKDVP (86 aa)) constitute a PPIase FKBP-type domain.

It belongs to the FKBP-type PPIase family. Tig subfamily.

The protein resides in the cytoplasm. The enzyme catalyses [protein]-peptidylproline (omega=180) = [protein]-peptidylproline (omega=0). Functionally, involved in protein export. Acts as a chaperone by maintaining the newly synthesized protein in an open conformation. Functions as a peptidyl-prolyl cis-trans isomerase. This is Trigger factor from Staphylococcus saprophyticus subsp. saprophyticus (strain ATCC 15305 / DSM 20229 / NCIMB 8711 / NCTC 7292 / S-41).